The following is a 1117-amino-acid chain: WD repeat and HMG-box DNA-binding protein 1 (1117 aa).

WD repeat units lie at residues 11-50 (GHTE…DPKS), 52-91 (NVGE…GILT), 93-131 (FTTN…QQQT), 134-173 (GHDA…CAVS), 184-223 (VNAK…NPFD), 228-267 (SISQ…CMER), and 271-310 (EKGY…SGKV). Ser-333 and Ser-377 each carry phosphoserine. Residue Lys-390 forms a Glycyl lysine isopeptide (Lys-Gly) (interchain with G-Cter in SUMO2) linkage. Lys-664 is modified (N6-acetyllysine). The tract at residues 816–885 (LAETQSEEEK…NLFQSANSSD (70 aa)) is disordered. Thr-819 bears the Phosphothreonine mark. Residue Ser-821 is modified to Phosphoserine. Residues 861 to 872 (DTVSEEKPESHN) are compositionally biased toward basic and acidic residues. Over residues 873–885 (HGQNLFQSANSSD) the composition is skewed to polar residues. Phosphoserine is present on residues Ser-910 and Ser-923. The tract at residues 911 to 1005 (SKEPAVSANS…AVCLQNSENQ (95 aa)) is disordered. A compositionally biased stretch (polar residues) spans 917 to 943 (SANSTRSANILDSMNKSSRKSTSLNRM). Residue Lys-953 is modified to N6-acetyllysine. A compositionally biased stretch (polar residues) spans 962 to 974 (KQASAASYFQKRT). The segment covering 975–987 (PQADKTEEVKENP) has biased composition (basic and acidic residues). A compositionally biased stretch (polar residues) spans 988–1004 (KSSSSDAPAVCLQNSEN). Positions 1004 to 1073 (NQRPKTGFQM…SDGAEAKKRK (70 aa)) form a DNA-binding region, HMG box. Residue Ser-1030 is modified to Phosphoserine. The interval 1054 to 1074 (WTNKAKGETASDGAEAKKRKR) is disordered. A Glycyl lysine isopeptide (Lys-Gly) (interchain with G-Cter in SUMO1); alternate cross-link involves residue Lys-1116. Lys-1116 participates in a covalent cross-link: Glycyl lysine isopeptide (Lys-Gly) (interchain with G-Cter in SUMO2); alternate.

As to quaternary structure, trimer. Interacts with the polymerase alpha catalytic subunit POLA1. Interacts with MCM10. Interacts with DNA2. Interacts with CDC45 and GINS2 subunit of GINS complex; these interactions associate WDHD1 with the CMG helicase complex.

It localises to the nucleus. It is found in the nucleoplasm. Its function is as follows. Core replisome component that acts as a replication initiation factor. Binds directly to the CMG complex and functions as a hub to recruit additional proteins to the replication fork. This is WD repeat and HMG-box DNA-binding protein 1 (Wdhd1) from Mus musculus (Mouse).